The sequence spans 150 residues: Transcriptional repressor NrdR (150 aa).

A zinc finger spans residues 3-34 (CPFCAFADSKVVDSRPDKEGSTIRRRRECESC). The 91-residue stretch at 49–139 (PLVIKKDGRR…VYRSFKDITE (91 aa)) folds into the ATP-cone domain.

The protein belongs to the NrdR family. Zn(2+) serves as cofactor.

Functionally, negatively regulates transcription of bacterial ribonucleotide reductase nrd genes and operons by binding to NrdR-boxes. This is Transcriptional repressor NrdR from Geotalea daltonii (strain DSM 22248 / JCM 15807 / FRC-32) (Geobacter daltonii).